A 680-amino-acid polypeptide reads, in one-letter code: Methionine--tRNA ligase (680 aa).

Positions Pro-14–His-24 match the 'HIGH' region motif. Positions 145, 148, 158, and 161 each coordinate Zn(2+). The 'KMSKS' region signature appears at Lys-330 to Ser-334. Lys-333 serves as a coordination point for ATP. The tRNA-binding domain occupies Asp-579–Lys-680.

Belongs to the class-I aminoacyl-tRNA synthetase family. MetG type 1 subfamily. In terms of assembly, homodimer. It depends on Zn(2+) as a cofactor.

It localises to the cytoplasm. The catalysed reaction is tRNA(Met) + L-methionine + ATP = L-methionyl-tRNA(Met) + AMP + diphosphate. Is required not only for elongation of protein synthesis but also for the initiation of all mRNA translation through initiator tRNA(fMet) aminoacylation. This Hydrogenovibrio crunogenus (strain DSM 25203 / XCL-2) (Thiomicrospira crunogena) protein is Methionine--tRNA ligase.